Here is a 454-residue protein sequence, read N- to C-terminus: DNA repair protein RadA (454 aa).

A C4-type zinc finger spans residues 11-28 (CTECGTHSPKWLGQCSGC). Residue 94–101 (GEPGIGKS) participates in ATP binding. Residues 251–255 (KNRFG) carry the RadA KNRFG motif motif. The tract at residues 350 to 454 (DVFLSIAGGL…TIKDAVRLLQ (105 aa)) is lon-protease-like.

Belongs to the RecA family. RadA subfamily.

Functionally, DNA-dependent ATPase involved in processing of recombination intermediates, plays a role in repairing DNA breaks. Stimulates the branch migration of RecA-mediated strand transfer reactions, allowing the 3' invading strand to extend heteroduplex DNA faster. Binds ssDNA in the presence of ADP but not other nucleotides, has ATPase activity that is stimulated by ssDNA and various branched DNA structures, but inhibited by SSB. Does not have RecA's homology-searching function. The sequence is that of DNA repair protein RadA from Chlamydia trachomatis serovar D (strain ATCC VR-885 / DSM 19411 / UW-3/Cx).